The following is a 355-amino-acid chain: MGVKFLKILVCGLFFWSLNAHLWGKQDNSFLGVAEKAYKSGNYSKATSYFKKACNDGVSEGCTQLGIIYENGQGTRIDYKKALEYYKTACQADDREGCFGLGGLYDEGLGTTQNYQEAIDAYAKACVLKHPESCYNLGIIYDRKIKGNADQAVTYYQKSCNFDMAKGCYVLGVAYEKGFLEVKQSNHKAVIYYLKACRLDDGQACRALGSLFENGDAGLDEDFEVAFDYLQKACGLNNSGGCASLGSMYMLGRYVKKDPQKAFNFFKQACDMGSAVSCSRMGFMYSQGDAVPKDLRKALDNYERGCDMGDEVGCFALAGMYYNMKDKENAIMIYDKGCKLGMKQACENLTKLRGY.

The N-terminal stretch at 1 to 22 (MGVKFLKILVCGLFFWSLNAHL) is a signal peptide. TPR repeat units follow at residues 27–60 (DNSF…GVSE), 63–96 (TQLG…DDRE), 98–131 (CFGL…LKHP), 132–166 (ESCY…DMAK), 202–240 (GQAC…NNSG), 245–275 (LGSM…MGSA), 276–311 (VSCS…MGDE), and 312–344 (VGCF…GMKQ). 9 disulfide bridges follow: cysteine 54-cysteine 62, cysteine 90-cysteine 98, cysteine 126-cysteine 134, cysteine 160-cysteine 168, cysteine 197-cysteine 205, cysteine 234-cysteine 242, cysteine 270-cysteine 278, cysteine 306-cysteine 314, and cysteine 338-cysteine 346.

This sequence belongs to the hcp beta-lactamase family.

The protein resides in the secreted. It catalyses the reaction a beta-lactam + H2O = a substituted beta-amino acid. In terms of biological role, may hydrolyze 6-aminopenicillinic acid and 7-aminocephalosporanic acid (ACA) derivatives. This is Putative beta-lactamase HcpE (hcpE) from Helicobacter pylori (strain ATCC 700392 / 26695) (Campylobacter pylori).